A 218-amino-acid polypeptide reads, in one-letter code: Claudin-5 (218 aa).

Over 1–7 the chain is Cytoplasmic; that stretch reads MGSAALE. A helical transmembrane segment spans residues 8-28; that stretch reads ILGLVLCLVGWGGLILACGLP. Residues 29-81 are Extracellular-facing; it reads MWQVTAFLDHNIVTAQTTWKGLWMSCVVQSTGHMQCKVYDSVLALSTEVQAAR. Residues 82–102 form a helical membrane-spanning segment; the sequence is ALTVSAVLLAFVALFVTLAGA. Over 103–122 the chain is Cytoplasmic; the sequence is QCTTCVAPGPAKARVALTGG. Residues 123 to 143 traverse the membrane as a helical segment; sequence VLYLFCGLLALVPLCWFANIV. The Extracellular segment spans residues 144–159; sequence VREFYDPSVPVSQKYE. The helical transmembrane segment at 160–180 threads the bilayer; sequence LGAALYIGWAATALLMVGGCL. Residues 181-218 are Cytoplasmic-facing; the sequence is LCCGAWVCTGRPDLSFPVKYSAPRRPTATGDYDKKNYV. Positions 217–218 are interactions with TJP1, TJP2 and TJP3; sequence YV.

This sequence belongs to the claudin family. As to quaternary structure, directly interacts with TJP1/ZO-1, TJP2/ZO-2 and TJP3/ZO-3. Interacts with MPDZ.

Its subcellular location is the cell junction. It localises to the tight junction. The protein resides in the cell membrane. Its function is as follows. Plays a major role in tight junction-specific obliteration of the intercellular space. This chain is Claudin-5 (CLDN5), found in Homo sapiens (Human).